A 1064-amino-acid chain; its full sequence is Adenylate cyclase type 4 (1064 aa).

Topologically, residues Met1–Pro28 are cytoplasmic. 6 helical membrane passes run Leu29–Ala50, Phe61–Ser80, Gly94–Trp117, Val120–Met138, Ala141–Trp162, and Leu170–Tyr190. Over His191–Lys582 the chain is Cytoplasmic. 3 residues coordinate Mg(2+): Asp278, Ile279, and Asp322. ATP is bound by residues Asp278–Thr283, Leu320–Asp322, and Arg366. The segment at Asp498 to Thr523 is disordered. Phosphoserine is present on Ser517. The residue at position 533 (Thr533) is a Phosphothreonine. The next 3 helical transmembrane spans lie at Tyr583–Thr604, Ala608–Glu630, and Val661–Val684. Residues Ser685 to Pro707 are Extracellular-facing. 2 N-linked (GlcNAc...) asparagine glycosylation sites follow: Asn694 and Asn701. A run of 3 helical transmembrane segments spans residues Ala708 to Leu733, Leu741 to Trp761, and Met788 to Ala804. Over Arg805–Ser1064 the chain is Cytoplasmic. Residues Lys914, Asp994 to Trp996, Asn1001 to Arg1005, and Lys1041 each bind ATP.

This sequence belongs to the adenylyl cyclase class-4/guanylyl cyclase family. It depends on Mg(2+) as a cofactor. Mn(2+) serves as cofactor. In terms of tissue distribution, widely distributed.

The protein localises to the cell membrane. The protein resides in the cytoplasm. The catalysed reaction is ATP = 3',5'-cyclic AMP + diphosphate. Its activity is regulated as follows. Activated by forskolin. Insensitive to calcium/calmodulin. Stimulated by GNAS and by the G-protein beta and gamma subunit complex. Its function is as follows. Catalyzes the formation of the signaling molecule cAMP in response to G-protein signaling. The protein is Adenylate cyclase type 4 (Adcy4) of Rattus norvegicus (Rat).